Here is a 398-residue protein sequence, read N- to C-terminus: Type III polyketide synthase pspB (398 aa).

CoA-binding positions include Lys-47 and 47 to 54; that span reads KLLQINRS. The Nucleophile role is filled by Cys-152. 214–215 provides a ligand contact to substrate; sequence SD. Residues Leu-267, Gly-321, 321–324, and Ala-324 each bind CoA; that span reads GGEA.

Belongs to the thiolase-like superfamily. Chalcone/stilbene synthases family. As to quaternary structure, homodimer.

The catalysed reaction is 11 malonyl-CoA + acetyl-CoA + S-adenosyl-L-methionine + 12 NADPH + 22 H(+) = soppiline B + S-adenosyl-L-homocysteine + 12 CO2 + 12 NADP(+) + 12 CoA + 8 H2O. It functions in the pathway secondary metabolite biosynthesis. Type III polyketide synthase; part of the gene cluster that mediates the biosynthesis of the alkylresorcinols called soppilines. The biosynthesis starts with the HR-PKS pspA-catalyzed carbon chain assembly through nine chain elongation cycles, using acetyl CoA and malonyl CoA as a starter and extender units, respectively, to produce the polyketide soppiline A. In the first round, the KR, DH, and CMeT domains work to produce 2-methyl-2-butenyl thioester. In rounds 2 to 5, the KR, DH, and ER domains fully catalyze the reduction of the elongated beta-ketothioester, resulting in the insertion of eight methylene units. The unusual Z,E,Z-triene motif is likely constructed during rounds 6 to 8. Typically, the DH domain introduces a double bond at an alpha,beta-position of an elongated polyketide chain, with the dehydration of a beta-hydroxy group. The last extension cycle would be carried out with L-oriented beta-ketoreduction by the KR domain to produce beta-hydroxy carboxylic acid soppiline A. The type III PKS pspB intercepts the elongated polyketide chain at round 8 from the HR-PKS pspA, followed by a tri-keto extension and decarboxylative aldol cyclization to produce 1,3,5-trisubstituted alkylresorcinol soppiline B. Subsequently, the cytochrome P450 monooxygenase pspC catalyzes three-step oxidations at the C-4 methyl group to carboxylic acid to yield soppiline C. The protein is Type III polyketide synthase pspB of Penicillium soppii.